We begin with the raw amino-acid sequence, 475 residues long: Equilibrative nucleoside transporter 3 (475 aa).

At 1–51 (MAFASEDNVYHSSNAVYRAPSNHQEADQEALLGKLLDYPAPGLQRPEDRFN) the chain is on the cytoplasmic side. Ser21 is modified (phosphoserine). The Dileucine internalization motif motif lies at 31–32 (LL). A helical membrane pass occupies residues 52–72 (GAYIIFFCLGIGGLLPWNFFV). At 73 to 105 (TAKEYWAYKLRNCSSPASGEDPEDMDILNYFES) the chain is on the extracellular side. N-linked (GlcNAc...) asparagine glycosylation occurs at Asn84. The helical transmembrane segment at 106–126 (YLAVASTVPSLLFLVANFLLV) threads the bilayer. The Cytoplasmic segment spans residues 127-134 (NRVQVHVR). A helical membrane pass occupies residues 135–155 (VLASLSVSLAIFVVMIVLVKV). Over 156 to 162 (DTSSWTR) the chain is Extracellular. A helical transmembrane segment spans residues 163 to 183 (GFFSLTIACMAIISSSSTIFN). Over 184–199 (SSVYGLTGSFPMRNAQ) the chain is Cytoplasmic. A helical membrane pass occupies residues 200 to 220 (ALISGGAMGGTVSAVALLVDL). The Extracellular portion of the chain corresponds to 221 to 230 (AASSDVRDST). Residues 231 to 251 (LAFFLMAAVFLGLCMGLYLLL) form a helical membrane-spanning segment. The Cytoplasmic segment spans residues 252 to 305 (SQLEYARYYMRPVAPVRVFSGEDNPSQDAPSASSVAPASRVMHTPPLGPILKKT). Residues 306 to 326 (ASLGFCAVSLYFVTAFIIPAI) form a helical membrane-spanning segment. The Extracellular segment spans residues 327–340 (STNIQSMHKGTGSP). The helical transmembrane segment at 341-361 (WTSKFFVPLTVFLLFNFADLC) threads the bilayer. Topologically, residues 362 to 377 (GRQVTAWIQVPGPRSK) are cytoplasmic. A helical membrane pass occupies residues 378–398 (LLPGLVVSRFCLVPLFLLCNY). Over 399-415 (QPRSHLTKVLFQSDIYP) the chain is Extracellular. Residues 416–436 (VLFTCLLGLSNGYLSTLVLIY) traverse the membrane as a helical segment. At 437-450 (GPKIVPRELAEATS) the chain is on the cytoplasmic side. The helical transmembrane segment at 451–471 (VVMLFYMSVGLMLGSACAALL) threads the bilayer. The Extracellular portion of the chain corresponds to 472-475 (EHFI).

This sequence belongs to the SLC29A/ENT transporter (TC 2.A.57) family. In terms of tissue distribution, expressed in macrophages.

The protein localises to the lysosome membrane. It is found in the late endosome membrane. It localises to the mitochondrion membrane. Its subcellular location is the cell membrane. It catalyses the reaction adenosine(in) = adenosine(out). The catalysed reaction is guanosine(in) = guanosine(out). It carries out the reaction inosine(in) = inosine(out). The enzyme catalyses uridine(out) = uridine(in). It catalyses the reaction cytidine(in) = cytidine(out). The catalysed reaction is thymidine(in) = thymidine(out). It carries out the reaction 2'-deoxyadenosine(in) = 2'-deoxyadenosine(out). The enzyme catalyses 2'-deoxycytidine(in) = 2'-deoxycytidine(out). It catalyses the reaction guanine(out) = guanine(in). The catalysed reaction is uracil(in) = uracil(out). It carries out the reaction (R)-noradrenaline(out) = (R)-noradrenaline(in). The enzyme catalyses dopamine(out) = dopamine(in). It catalyses the reaction serotonin(out) = serotonin(in). The catalysed reaction is tyramine(in) = tyramine(out). It carries out the reaction ATP(in) = ATP(out). In terms of biological role, uniporter that mediates the facilitative transport of nucleoside across lysosomal and mitochondrial membranes. Functions as a non-electrogenic Na(+)-independent transporter. Substrate transport is pH-dependent and enhanced under acidic condition, probably reflecting the location of the transporter in acidic intracellular compartments. Proton is not a cotransporting ion but most likely change the ionization state of the transporter which dictates transport-permissible/impermissible conformation for nucleoside translocation. May direct the nucleoside transport from lysosomes to cytosol or cytosol to mitochondria to facilitate the fundamental function of salvage synthesis of nucleic acids. Involved in the transport of nucleosides (adenosine, guanosine, uridine, thymidine, cytidine and inosine) and deoxynucleosides (deoxyadenosine, deoxycytidine). Also mediates transport of purine nucleobases (adenine, guanine), and pyrimidine nucleobases (uracil). Also able to transport monoamine neurotransmitters dopamine, serotonin, noradrenaline and tyramine. Capable of transporting ATP. Mediates nucleoside export from lysosomes in macrophages, which regulates macrophage functions and numbers. The polypeptide is Equilibrative nucleoside transporter 3 (Mus musculus (Mouse)).